The chain runs to 418 residues: UDP-glucuronic acid decarboxylase 1 (418 aa).

The Cytoplasmic portion of the chain corresponds to 1 to 17; that stretch reads MMRMSWMVTVINRRMMK. Residues 18-38 traverse the membrane as a helical; Signal-anchor for type II membrane protein segment; the sequence is ILIALALIAYIASVWGTYANM. The Lumenal segment spans residues 39–418; sequence RSIQEHGEMK…RMKKGRPRHN (380 aa). Residues glycine 96, phenylalanine 97, valine 98, aspartate 117, asparagine 118, phenylalanine 120, threonine 121, glycine 122, aspartate 142, and valine 143 each coordinate NAD(+). Residues leucine 147 and tyrosine 148 each contribute to the UDP-alpha-D-glucuronate site. NAD(+)-binding residues include leucine 157 and serine 159. Lysine 175 contacts UDP-alpha-D-glucuronate. Threonine 176 lines the NAD(+) pocket. UDP-alpha-D-glucuronate contacts are provided by asparagine 183, glycine 186, lysine 189, and arginine 190. NAD(+) contacts are provided by alanine 198, tyrosine 229, and lysine 233. Tyrosine 229 functions as the Proton acceptor in the catalytic mechanism. Residues tyrosine 243, glutamine 246, and glutamate 247 each coordinate UDP-alpha-D-glucuronate. NAD(+) contacts are provided by threonine 259, histidine 265, and arginine 270. N-linked (GlcNAc...) asparagine glycosylation is found at asparagine 314 and asparagine 383. Positions 397–418 are disordered; that stretch reads ANNQYIPKPKAARMKKGRPRHN. Positions 406–418 are enriched in basic residues; it reads KAARMKKGRPRHN.

This sequence belongs to the NAD(P)-dependent epimerase/dehydratase family. UDP-glucuronic acid decarboxylase subfamily. Homodimer and homotetramer. The cofactor is NAD(+).

It localises to the golgi apparatus. Its subcellular location is the golgi stack membrane. The catalysed reaction is UDP-alpha-D-glucuronate + H(+) = UDP-alpha-D-xylose + CO2. It functions in the pathway nucleotide-sugar biosynthesis; UDP-alpha-D-xylose biosynthesis; UDP-alpha-D-xylose from UDP-alpha-D-glucuronate: step 1/1. In terms of biological role, catalyzes the NAD-dependent decarboxylation of UDP-glucuronic acid to UDP-xylose. Necessary for the biosynthesis of the core tetrasaccharide in glycosaminoglycan biosynthesis. Essential during embryogenesis for craniofacial development. The protein is UDP-glucuronic acid decarboxylase 1 of Danio rerio (Zebrafish).